A 102-amino-acid chain; its full sequence is Cysteine-rich venom protein VAR9 (102 aa).

The signal sequence occupies residues 1–19; sequence MILLKLYLTLAAILCQSRG. One can recognise an SCP domain in the interval 41 to 80; the sequence is NKHNDLRRTVDPPAKNMLKMSWDNIIAESAKRAALRCNYK.

Belongs to the CRISP family. In terms of processing, contains 8 disulfide bonds. As to expression, expressed by the venom gland.

Its subcellular location is the secreted. In terms of biological role, blocks ryanodine receptors, and potassium channels. This chain is Cysteine-rich venom protein VAR9, found in Varanus varius (Lace monitor lizard).